The following is a 111-amino-acid chain: Dynein light chain Tctex-type (111 aa).

The protein belongs to the dynein light chain Tctex-type family.

It is found in the cytoplasm. The protein resides in the cytoskeleton. Its function is as follows. Acts as a non-catalytic accessory component of a dynein complex. The chain is Dynein light chain Tctex-type (dlc1) from Schizosaccharomyces pombe (strain 972 / ATCC 24843) (Fission yeast).